The following is a 230-amino-acid chain: Type II restriction enzyme Eco47I (230 aa).

It carries out the reaction Endonucleolytic cleavage of DNA to give specific double-stranded fragments with terminal 5'-phosphates.. Its function is as follows. A P subtype restriction enzyme that recognizes the double-stranded sequence 5'-GGWCC-3' and cleaves after G-1. The chain is Type II restriction enzyme Eco47I from Escherichia coli.